A 251-amino-acid polypeptide reads, in one-letter code: Hydroxyacylglutathione hydrolase (251 aa).

Residues His53, His55, Asp57, His58, His110, Asp127, and His165 each coordinate Zn(2+).

It belongs to the metallo-beta-lactamase superfamily. Glyoxalase II family. As to quaternary structure, monomer. Zn(2+) is required as a cofactor.

It carries out the reaction an S-(2-hydroxyacyl)glutathione + H2O = a 2-hydroxy carboxylate + glutathione + H(+). Its pathway is secondary metabolite metabolism; methylglyoxal degradation; (R)-lactate from methylglyoxal: step 2/2. Its function is as follows. Thiolesterase that catalyzes the hydrolysis of S-D-lactoyl-glutathione to form glutathione and D-lactic acid. In Yersinia pestis (strain Pestoides F), this protein is Hydroxyacylglutathione hydrolase.